Here is a 329-residue protein sequence, read N- to C-terminus: Glycerol-3-phosphate dehydrogenase [NAD(P)+] (329 aa).

Positions 14, 34, and 108 each coordinate NADPH. Residues Lys108, Gly137, and Ser139 each coordinate sn-glycerol 3-phosphate. Ala141 serves as a coordination point for NADPH. Residues Lys192, Asp245, Ser255, Arg256, and Asn257 each contribute to the sn-glycerol 3-phosphate site. The active-site Proton acceptor is the Lys192. Arg256 lines the NADPH pocket. Positions 280 and 282 each coordinate NADPH.

This sequence belongs to the NAD-dependent glycerol-3-phosphate dehydrogenase family.

Its subcellular location is the cytoplasm. It carries out the reaction sn-glycerol 3-phosphate + NAD(+) = dihydroxyacetone phosphate + NADH + H(+). The catalysed reaction is sn-glycerol 3-phosphate + NADP(+) = dihydroxyacetone phosphate + NADPH + H(+). It functions in the pathway membrane lipid metabolism; glycerophospholipid metabolism. Functionally, catalyzes the reduction of the glycolytic intermediate dihydroxyacetone phosphate (DHAP) to sn-glycerol 3-phosphate (G3P), the key precursor for phospholipid synthesis. The polypeptide is Glycerol-3-phosphate dehydrogenase [NAD(P)+] (Wigglesworthia glossinidia brevipalpis).